The sequence spans 74 residues: Translation initiation factor IF-1, chloroplastic (74 aa).

Positions 1–72 constitute an S1-like domain; sequence MERQNLIEME…TKGRITYRLR (72 aa).

Belongs to the IF-1 family. In terms of assembly, component of the 30S ribosomal translation pre-initiation complex which assembles on the 30S ribosome in the order IF-2 and IF-3, IF-1 and N-formylmethionyl-tRNA(fMet); mRNA recruitment can occur at any time during PIC assembly.

It localises to the plastid. It is found in the chloroplast. In terms of biological role, one of the essential components for the initiation of protein synthesis. Stabilizes the binding of IF-2 and IF-3 on the 30S subunit to which N-formylmethionyl-tRNA(fMet) subsequently binds. Helps modulate mRNA selection, yielding the 30S pre-initiation complex (PIC). Upon addition of the 50S ribosomal subunit IF-1, IF-2 and IF-3 are released leaving the mature 70S translation initiation complex. This chain is Translation initiation factor IF-1, chloroplastic, found in Mesostigma viride (Green alga).